Reading from the N-terminus, the 470-residue chain is Glutamate--tRNA ligase (470 aa).

The 'HIGH' region motif lies at 15 to 25 (PSPTGFLHIGG). Positions 240-244 (KLSKR) match the 'KMSKS' region motif. Lys243 provides a ligand contact to ATP.

It belongs to the class-I aminoacyl-tRNA synthetase family. Glutamate--tRNA ligase type 1 subfamily. As to quaternary structure, monomer.

The protein resides in the cytoplasm. It carries out the reaction tRNA(Glu) + L-glutamate + ATP = L-glutamyl-tRNA(Glu) + AMP + diphosphate. Catalyzes the attachment of glutamate to tRNA(Glu) in a two-step reaction: glutamate is first activated by ATP to form Glu-AMP and then transferred to the acceptor end of tRNA(Glu). The chain is Glutamate--tRNA ligase from Caulobacter vibrioides (strain ATCC 19089 / CIP 103742 / CB 15) (Caulobacter crescentus).